Here is a 1748-residue protein sequence, read N- to C-terminus: WD repeat-containing protein 90 (1748 aa).

The segment at 1–207 is binds with microtubules; that stretch reads MARAWQHPFL…VTPMPREMAF (207 aa). Phosphoserine is present on S241. The segment at 274–308 is disordered; it reads QTPSPTASGRAALAPRPFPEVSLSQERSDASNADG. WD repeat units follow at residues 407–450, 452–494, 501–541, 615–654, 656–695, 698–737, 740–779, 782–821, 882–922, 926–964, 969–1009, 1156–1201, 1204–1245, 1247–1286, 1298–1326, 1327–1376, 1433–1472, 1475–1520, 1523–1562, 1568–1614, and 1715–1748; these read GHTD…CLFR, PMHV…LGGE, AHTD…LRSC, SSGPGIAISSLSVSPAMCAVGSEDGFLRLWPLDFSSVLLE, EHEGPVSSVCVSPDGLRVLSATSSGHLGFLDTLSRVYHML, SHTAPVLALAMEQRRGQLATVSQDRTVRIWDLATLQQLYD, SSEDAPCAVTFHPTRPTFFCGFSSGAVRSFSLEAAEVLVE, CHRGAVTGLTATPDGRLLFSSCSQGSLAQYSCADPQWHVL, SRLD…IIRE, VHPEPCPSLTLSEDARFLLIAAGRTIKVWDYATQASPGP, GHSE…QSFP, GHSA…CQHL, PHST…LVSS, RLPEPVHGVAFNPWDAGELTCVGQGTVTFWLLQQRGADIS, VGAGELTSLCYGAPPLLYCGTSSGQVCVW, DTRA…ELRC, GHRSKVNEVVFSPGESHCATCSEDGSVRVWALASMELVIQ, VLNQ…MELK, PHPVALTTVAFSTDGQTVLSGDKDGLVAVSHPCTGTTFRV, GAPI…NHCE, and GHDNAVHLCRFTPSARLLFTAARNEILVWEVPGL. Positions 1004–1071 are disordered; the sequence is SDQSFPGAPP…GARDTRNSGA (68 aa).

The protein belongs to the WD repeat WDR90/POC16 family.

The protein resides in the cytoplasm. It localises to the cytoskeleton. It is found in the microtubule organizing center. The protein localises to the centrosome. Its subcellular location is the centriole. The protein resides in the centriolar satellite. Its function is as follows. Microtubule-binding protein that plays a crucial role in ensuring inner core protein localization within the centriole core, as well as in maintaining the microtubule wall integrity and the overall centriole roundness and stability. Required for efficient primary cilium formation. In Homo sapiens (Human), this protein is WD repeat-containing protein 90 (WDR90).